A 388-amino-acid chain; its full sequence is Succinate--CoA ligase [ADP-forming] subunit beta (388 aa).

Residues 9-244 (KEIFRSMGVA…LEEEDPKEIE (236 aa)) enclose the ATP-grasp domain. ATP is bound by residues Lys46, 53–55 (GRG), Glu99, Cys102, and Glu107. 2 residues coordinate Mg(2+): Asn199 and Asp213. Substrate is bound by residues Asn264 and 321-323 (GIM).

This sequence belongs to the succinate/malate CoA ligase beta subunit family. As to quaternary structure, heterotetramer of two alpha and two beta subunits. The cofactor is Mg(2+).

The enzyme catalyses succinate + ATP + CoA = succinyl-CoA + ADP + phosphate. The catalysed reaction is GTP + succinate + CoA = succinyl-CoA + GDP + phosphate. The protein operates within carbohydrate metabolism; tricarboxylic acid cycle; succinate from succinyl-CoA (ligase route): step 1/1. Succinyl-CoA synthetase functions in the citric acid cycle (TCA), coupling the hydrolysis of succinyl-CoA to the synthesis of either ATP or GTP and thus represents the only step of substrate-level phosphorylation in the TCA. The beta subunit provides nucleotide specificity of the enzyme and binds the substrate succinate, while the binding sites for coenzyme A and phosphate are found in the alpha subunit. This is Succinate--CoA ligase [ADP-forming] subunit beta from Staphylococcus epidermidis (strain ATCC 35984 / DSM 28319 / BCRC 17069 / CCUG 31568 / BM 3577 / RP62A).